The following is a 201-amino-acid chain: Small ribosomal subunit protein uS4 (201 aa).

Residues 26–45 (FEKRNYPPGQHGNNRRRGKK) form a disordered region. The S4 RNA-binding domain maps to 93–153 (SRLDNVVYRM…EKSKSLAVVQ (61 aa)).

This sequence belongs to the universal ribosomal protein uS4 family. Part of the 30S ribosomal subunit. Contacts protein S5. The interaction surface between S4 and S5 is involved in control of translational fidelity.

Functionally, one of the primary rRNA binding proteins, it binds directly to 16S rRNA where it nucleates assembly of the body of the 30S subunit. In terms of biological role, with S5 and S12 plays an important role in translational accuracy. The chain is Small ribosomal subunit protein uS4 from Christiangramia forsetii (strain DSM 17595 / CGMCC 1.15422 / KT0803) (Gramella forsetii).